The sequence spans 416 residues: Tyrosine--tRNA ligase (416 aa).

Residue tyrosine 39 participates in L-tyrosine binding. Residues 44–53 (CTASSLHVGS) carry the 'HIGH' region motif. Residues tyrosine 176 and glutamine 180 each coordinate L-tyrosine. The short motif at 236–240 (KMGKT) is the 'KMSKS' region element. An ATP-binding site is contributed by lysine 239. In terms of domain architecture, S4 RNA-binding spans 349-415 (ISLIDLLHDI…GKKRHIKVMV (67 aa)).

Belongs to the class-I aminoacyl-tRNA synthetase family. TyrS type 1 subfamily. Homodimer.

Its subcellular location is the cytoplasm. The catalysed reaction is tRNA(Tyr) + L-tyrosine + ATP = L-tyrosyl-tRNA(Tyr) + AMP + diphosphate + H(+). Its function is as follows. Catalyzes the attachment of tyrosine to tRNA(Tyr) in a two-step reaction: tyrosine is first activated by ATP to form Tyr-AMP and then transferred to the acceptor end of tRNA(Tyr). This Wolbachia sp. subsp. Brugia malayi (strain TRS) protein is Tyrosine--tRNA ligase.